A 374-amino-acid chain; its full sequence is Glutamate 5-kinase (374 aa).

K13 contributes to the ATP binding site. Positions 54, 141, and 153 each coordinate substrate. 173–174 (SD) serves as a coordination point for ATP. One can recognise a PUA domain in the interval 278–355 (KGTVHLDSGA…NEIESVLGYP (78 aa)).

It belongs to the glutamate 5-kinase family.

The protein resides in the cytoplasm. It carries out the reaction L-glutamate + ATP = L-glutamyl 5-phosphate + ADP. It participates in amino-acid biosynthesis; L-proline biosynthesis; L-glutamate 5-semialdehyde from L-glutamate: step 1/2. Functionally, catalyzes the transfer of a phosphate group to glutamate to form L-glutamate 5-phosphate. The sequence is that of Glutamate 5-kinase from Roseobacter denitrificans (strain ATCC 33942 / OCh 114) (Erythrobacter sp. (strain OCh 114)).